We begin with the raw amino-acid sequence, 462 residues long: Aquaporin-1 (462 aa).

The segment covering 1–11 (MTMRSPLTNDH) has biased composition (polar residues). Residues 1–24 (MTMRSPLTNDHPQPLRASPLSEHD) are disordered. Residues 1–146 (MTMRSPLTND…KWMNSDWKNH (146 aa)) lie on the Cytoplasmic side of the membrane. Residues 147-167 (IVAVIGELIGTSLFLFFGYAG) traverse the membrane as a helical segment. The Extracellular portion of the chain corresponds to 168 to 182 (IEVAKLQGREPPDLE). Residues 183–203 (VLFYISATFGASLMVTAWIFF) traverse the membrane as a helical segment. Residues 204–229 (RISGGLFNPAVTLALAILKAVSPIRA) lie on the Cytoplasmic side of the membrane. The NPA 1 signature appears at 211–213 (NPA). A helical transmembrane segment spans residues 230–250 (FLLVITQLGASCLAAILVQEI). Topologically, residues 251 to 269 (FPKQLDVATTLGSGTSMGQ) are extracellular. A helical membrane pass occupies residues 270-290 (GFVIEAITTAALIFTIIMLAV). Over 291–296 (EKHKAT) the chain is Cytoplasmic. Residues 297–317 (FVAPIGIGLALFVAHMVAVPF) traverse the membrane as a helical segment. Residues 318-341 (TGASLNPARSFGPSAIVWNFPREH) are Extracellular-facing. The short motif at 323–325 (NPA) is the NPA 2 element. The helical transmembrane segment at 342-362 (WIYWVGPILGAGLAVLFFRLI) threads the bilayer. The Cytoplasmic portion of the chain corresponds to 363 to 462 (KLMEYEMANP…WRRQQYRNVV (100 aa)). Residues 407 to 433 (GKSWYRDDSSSGSMRRKESVNSFTGGR) form a disordered region. The segment covering 410 to 425 (WYRDDSSSGSMRRKES) has biased composition (basic and acidic residues).

Belongs to the MIP/aquaporin (TC 1.A.8) family.

The protein localises to the membrane. The enzyme catalyses H2O(in) = H2O(out). Its function is as follows. Water channel required to facilitate the transport of water across membranes. Involved in conidiation. The sequence is that of Aquaporin-1 from Botryotinia fuckeliana (strain B05.10) (Noble rot fungus).